A 51-amino-acid chain; its full sequence is MARNKPLAKKLRLAKAAKQNRRVPVWVIVKTNRKVMTHPKRRHWRRTKLKE.

This sequence belongs to the eukaryotic ribosomal protein eL39 family.

In Thermococcus gammatolerans (strain DSM 15229 / JCM 11827 / EJ3), this protein is Large ribosomal subunit protein eL39.